The primary structure comprises 88 residues: Large ribosomal subunit protein bL27 (88 aa).

It belongs to the bacterial ribosomal protein bL27 family.

The chain is Large ribosomal subunit protein bL27 from Carboxydothermus hydrogenoformans (strain ATCC BAA-161 / DSM 6008 / Z-2901).